The sequence spans 132 residues: Glycine cleavage system H protein (132 aa).

In terms of domain architecture, Lipoyl-binding spans 24–107; the sequence is TATIGLSAFA…GEEGWLIKVR (84 aa). Position 65 is an N6-lipoyllysine (Lys65).

The protein belongs to the GcvH family. As to quaternary structure, the glycine cleavage system is composed of four proteins: P, T, L and H. Requires (R)-lipoate as cofactor.

The glycine cleavage system catalyzes the degradation of glycine. The H protein shuttles the methylamine group of glycine from the P protein to the T protein. In Synechocystis sp. (strain ATCC 27184 / PCC 6803 / Kazusa), this protein is Glycine cleavage system H protein.